The following is a 98-amino-acid chain: NADH-ubiquinone oxidoreductase chain 4L (98 aa).

A run of 3 helical transmembrane segments spans residues 2–22 (PSIS…MLMF), 29–49 (SLLC…LIIL), and 61–81 (ILLL…LVTV).

The protein belongs to the complex I subunit 4L family. As to quaternary structure, core subunit of respiratory chain NADH dehydrogenase (Complex I) which is composed of 45 different subunits.

The protein localises to the mitochondrion inner membrane. It catalyses the reaction a ubiquinone + NADH + 5 H(+)(in) = a ubiquinol + NAD(+) + 4 H(+)(out). In terms of biological role, core subunit of the mitochondrial membrane respiratory chain NADH dehydrogenase (Complex I) which catalyzes electron transfer from NADH through the respiratory chain, using ubiquinone as an electron acceptor. Part of the enzyme membrane arm which is embedded in the lipid bilayer and involved in proton translocation. This is NADH-ubiquinone oxidoreductase chain 4L (MT-ND4L) from Microcebus mamiratra (Claire's mouse lemur).